Consider the following 208-residue polypeptide: 3-demethoxyubiquinol 3-hydroxylase (208 aa).

Residues Glu57, Glu87, His90, Glu139, Glu171, and His174 each coordinate Fe cation.

This sequence belongs to the COQ7 family. Fe cation is required as a cofactor.

The protein resides in the cell membrane. The enzyme catalyses a 5-methoxy-2-methyl-3-(all-trans-polyprenyl)benzene-1,4-diol + AH2 + O2 = a 3-demethylubiquinol + A + H2O. It functions in the pathway cofactor biosynthesis; ubiquinone biosynthesis. Functionally, catalyzes the hydroxylation of 2-nonaprenyl-3-methyl-6-methoxy-1,4-benzoquinol during ubiquinone biosynthesis. This chain is 3-demethoxyubiquinol 3-hydroxylase, found in Burkholderia ambifaria (strain MC40-6).